Reading from the N-terminus, the 462-residue chain is Cysteine--tRNA ligase (462 aa).

Cysteine 30 contributes to the Zn(2+) binding site. The 'HIGH' region signature appears at 32–42 (MTVYDYCHVGH). Cysteine 214, histidine 239, and glutamate 243 together coordinate Zn(2+). Residues 271–275 (KMSKS) carry the 'KMSKS' region motif. Lysine 274 contributes to the ATP binding site.

Belongs to the class-I aminoacyl-tRNA synthetase family. Monomer. Zn(2+) serves as cofactor.

The protein resides in the cytoplasm. It carries out the reaction tRNA(Cys) + L-cysteine + ATP = L-cysteinyl-tRNA(Cys) + AMP + diphosphate. The sequence is that of Cysteine--tRNA ligase from Cupriavidus necator (strain ATCC 17699 / DSM 428 / KCTC 22496 / NCIMB 10442 / H16 / Stanier 337) (Ralstonia eutropha).